Reading from the N-terminus, the 93-residue chain is UPF0521 protein A (93 aa).

Residues 2 to 58 (SLKEVITSLKNDFHSINKEIDSMKENNEKQEDKIFQEIKKLKLEMELLRKDNLSFKT) adopt a coiled-coil conformation.

This sequence belongs to the UPF0521 family.

The protein is UPF0521 protein A of Dictyostelium discoideum (Social amoeba).